The following is a 72-amino-acid chain: Gene 35 protein (72 aa).

This Mycobacterium phage L5 (Mycobacteriophage L5) protein is Gene 35 protein (35).